The following is a 141-amino-acid chain: uncharacterized protein (141 aa).

The protein resides in the cytoplasm. This is an uncharacterized protein from Homo sapiens (Human).